We begin with the raw amino-acid sequence, 268 residues long: Ubiquinone biosynthesis protein COQ4 homolog 1, mitochondrial (268 aa).

The span at 1 to 10 (MFLRRVHPVR) shows a compositional bias: basic residues. A mitochondrion-targeting transit peptide spans 1–18 (MFLRRVHPVRLGHASQRS). The disordered stretch occupies residues 1–44 (MFLRRVHPVRLGHASQRSLTTTKSRNESTTTTVEAPQAAPSPPP). The segment covering 20-38 (TTTKSRNESTTTTVEAPQA) has biased composition (low complexity). Residues His177, Asp178, His181, and Glu193 each coordinate Zn(2+).

This sequence belongs to the COQ4 family. As to quaternary structure, component of a multi-subunit COQ enzyme complex. Zn(2+) serves as cofactor.

The protein resides in the mitochondrion inner membrane. The catalysed reaction is a 4-hydroxy-3-methoxy-5-(all-trans-polyprenyl)benzoate + H(+) = a 2-methoxy-6-(all-trans-polyprenyl)phenol + CO2. Its pathway is cofactor biosynthesis; ubiquinone biosynthesis. In terms of biological role, lyase that catalyzes the C1-decarboxylation of 4-hydroxy-3-methoxy-5-(all-trans-polyprenyl)benzoic acid into 2-methoxy-6-(all-trans-polyprenyl)phenol during ubiquinone biosynthesis. This chain is Ubiquinone biosynthesis protein COQ4 homolog 1, mitochondrial, found in Culex quinquefasciatus (Southern house mosquito).